The following is a 452-amino-acid chain: Isocitrate dehydrogenase [NADP], mitochondrial (452 aa).

A mitochondrion-targeting transit peptide spans 1–39 (MAGYLRVVRSLCRASGSGSAWAPAALTAPNLQEQPRRHY). Residues Lys-45, Lys-48, Lys-67, and Lys-69 each carry the N6-acetyllysine modification. N6-acetyllysine; alternate occurs at positions 80 and 106. N6-succinyllysine; alternate occurs at positions 80 and 106. Residues 115 to 117 (TIT) and Arg-122 each bind NADP(+). Thr-117 contributes to the D-threo-isocitrate binding site. D-threo-isocitrate contacts are provided by residues 134–140 (SPNGTIR) and Arg-149. Lys-155 carries the post-translational modification N6-acetyllysine. Lys-166 is modified (N6-acetyllysine; alternate). The residue at position 166 (Lys-166) is an N6-succinyllysine; alternate. Position 172 (Arg-172) interacts with D-threo-isocitrate. Lys-180 and Lys-193 each carry N6-acetyllysine; alternate. An N6-succinyllysine; alternate mark is found at Lys-180 and Lys-193. At Lys-199 the chain carries N6-acetyllysine. At Lys-256 the chain carries N6-acetyllysine; alternate. At Lys-256 the chain carries N6-succinyllysine; alternate. N6-acetyllysine is present on residues Lys-263, Lys-272, Lys-275, and Lys-280. Residue Lys-282 is modified to N6-acetyllysine; alternate. Lys-282 bears the N6-succinyllysine; alternate mark. Position 291 (Asp-291) interacts with Mn(2+). Lys-299 provides a ligand contact to NADP(+). Asp-314 serves as a coordination point for Mn(2+). NADP(+) contacts are provided by residues 349–354 (GTVTRH) and Asn-367. The residue at position 384 (Lys-384) is an N6-acetyllysine; alternate. Position 384 is an N6-succinyllysine; alternate (Lys-384). N6-acetyllysine occurs at positions 400, 413, and 442.

Belongs to the isocitrate and isopropylmalate dehydrogenases family. Homodimer. It depends on Mg(2+) as a cofactor. Requires Mn(2+) as cofactor. In terms of processing, acetylation at Lys-413 dramatically reduces catalytic activity. Deacetylated by SIRT3.

The protein resides in the mitochondrion. The enzyme catalyses D-threo-isocitrate + NADP(+) = 2-oxoglutarate + CO2 + NADPH. Plays a role in intermediary metabolism and energy production. It may tightly associate or interact with the pyruvate dehydrogenase complex. The sequence is that of Isocitrate dehydrogenase [NADP], mitochondrial (IDH2) from Bos taurus (Bovine).